The chain runs to 331 residues: D-alanine--D-alanine ligase (331 aa).

Positions 112 to 314 (KRIWRSEGLP…YEDLCLRLLA (203 aa)) constitute an ATP-grasp domain. 138–193 (LQTLGAPMIVKPAREGSTIGLSKVHQAQQCASAYLLAARYDPEVLCEQFIAGDELT) contacts ATP. The Mg(2+) site is built by Asp267, Glu281, and Asn283.

It belongs to the D-alanine--D-alanine ligase family. The cofactor is Mg(2+). Requires Mn(2+) as cofactor.

It localises to the cytoplasm. It carries out the reaction 2 D-alanine + ATP = D-alanyl-D-alanine + ADP + phosphate + H(+). It participates in cell wall biogenesis; peptidoglycan biosynthesis. Its function is as follows. Cell wall formation. The sequence is that of D-alanine--D-alanine ligase from Verminephrobacter eiseniae (strain EF01-2).